The sequence spans 265 residues: Arcelin-1 (265 aa).

The signal sequence occupies residues 1–21 (MASSNLLTLALFLVLLTHANS). Asn-33, Asn-89, and Asn-128 each carry an N-linked (GlcNAc...) asparagine glycan. A disulfide bond links Cys-165 and Cys-201.

It belongs to the leguminous lectin family. As to quaternary structure, homodimer.

Seed storage. This carbohydrate-binding lectin has toxic effects on an important bean bruchid pest, Z.subfasciatus. Antibiosis properties of legume lectins are proposed to be due to the lysis of epithelial cells of the intestine by binding to the carbohydrate moieties of these proteins. This chain is Arcelin-1 (ARC1), found in Phaseolus vulgaris (Kidney bean).